We begin with the raw amino-acid sequence, 218 residues long: MRVILLGAPGAGKGTQAQYISEAFDIPQISTGDMLRAAVKAQSELGMAAKKVMDEGGLVPDDIIIGLVKERIEEDDCANGCLFDGFPRTIAQADALRTEGIRIDNIIEIDVPDEEIIKRMSGRRVHPASGRTYHIVFNPPAVEGKDDVTGEDLVQRDDDTEETVRKRLKVYHDQTEPLVGYYRNLAIEGSDDAPKYSCINGIGQVEQIKQDIIAALKQ.

10–15 (GAGKGT) lines the ATP pocket. An NMP region spans residues 30–59 (STGDMLRAAVKAQSELGMAAKKVMDEGGLV). Residues Thr-31, Arg-36, 57-59 (GLV), 85-88 (GFPR), and Gln-92 each bind AMP. Residues 122–159 (GRRVHPASGRTYHIVFNPPAVEGKDDVTGEDLVQRDDD) form an LID region. Residues Arg-123 and 132-133 (TY) each bind ATP. AMP is bound by residues Arg-156 and Arg-167. Residue Gly-203 participates in ATP binding.

This sequence belongs to the adenylate kinase family. Monomer.

Its subcellular location is the cytoplasm. The enzyme catalyses AMP + ATP = 2 ADP. It functions in the pathway purine metabolism; AMP biosynthesis via salvage pathway; AMP from ADP: step 1/1. Catalyzes the reversible transfer of the terminal phosphate group between ATP and AMP. Plays an important role in cellular energy homeostasis and in adenine nucleotide metabolism. The sequence is that of Adenylate kinase from Chlorobaculum parvum (strain DSM 263 / NCIMB 8327) (Chlorobium vibrioforme subsp. thiosulfatophilum).